The following is a 172-amino-acid chain: Adenylate kinase isoenzyme 6 (172 aa).

Gly-13, Gly-15, Lys-16, Thr-17, and Thr-18 together coordinate ATP. The tract at residues 33 to 56 is NMPbind; the sequence is NVGDLAREGELYDGFDEEYNCPIL. Residues 108–118 form an LID region; it reads TRGYSEKKLND. ATP-binding residues include Arg-109 and Lys-148.

It belongs to the adenylate kinase family. AK6 subfamily. As to quaternary structure, monomer and homodimer. Interacts with small ribosomal subunit protein uS11. Not a structural component of 43S pre-ribosomes, but transiently interacts with them by binding to uS11. Interacts with COIL (via C-terminus).

The protein localises to the cytoplasm. It is found in the nucleus. Its subcellular location is the nucleoplasm. It localises to the cajal body. The catalysed reaction is AMP + ATP = 2 ADP. The enzyme catalyses ATP + H2O = ADP + phosphate + H(+). In terms of biological role, broad-specificity nucleoside monophosphate (NMP) kinase that catalyzes the reversible transfer of the terminal phosphate group between nucleoside triphosphates and monophosphates. Also has ATPase activity. Involved in the late cytoplasmic maturation steps of the 40S ribosomal particles, specifically 18S rRNA maturation. While NMP activity is not required for ribosome maturation, ATPase activity is. Associates transiently with small ribosomal subunit protein uS11. ATP hydrolysis breaks the interaction with uS11. May temporarily remove uS11 from the ribosome to enable a conformational change of the ribosomal RNA that is needed for the final maturation step of the small ribosomal subunit. Its NMP activity may have a role in nuclear energy homeostasis. May be involved in regulation of Cajal body (CB) formation. This is Adenylate kinase isoenzyme 6 from Oryctolagus cuniculus (Rabbit).